The following is a 186-amino-acid chain: NADH-quinone oxidoreductase subunit I (186 aa).

2 consecutive 4Fe-4S ferredoxin-type domains span residues 70-100 and 113-142; these read LTTR…IQSA and DRFE…MSKD. The [4Fe-4S] cluster site is built by Cys80, Cys83, Cys86, Cys90, Cys122, Cys125, Cys128, and Cys132.

It belongs to the complex I 23 kDa subunit family. In terms of assembly, NDH-1 is composed of 14 different subunits. Subunits NuoA, H, J, K, L, M, N constitute the membrane sector of the complex. It depends on [4Fe-4S] cluster as a cofactor.

The protein resides in the cell inner membrane. The catalysed reaction is a quinone + NADH + 5 H(+)(in) = a quinol + NAD(+) + 4 H(+)(out). Its function is as follows. NDH-1 shuttles electrons from NADH, via FMN and iron-sulfur (Fe-S) centers, to quinones in the respiratory chain. The immediate electron acceptor for the enzyme in this species is believed to be ubiquinone. Couples the redox reaction to proton translocation (for every two electrons transferred, four hydrogen ions are translocated across the cytoplasmic membrane), and thus conserves the redox energy in a proton gradient. The chain is NADH-quinone oxidoreductase subunit I from Pelobacter propionicus (strain DSM 2379 / NBRC 103807 / OttBd1).